The sequence spans 135 residues: ATP synthase epsilon chain (135 aa).

The protein belongs to the ATPase epsilon chain family. In terms of assembly, F-type ATPases have 2 components, CF(1) - the catalytic core - and CF(0) - the membrane proton channel. CF(1) has five subunits: alpha(3), beta(3), gamma(1), delta(1), epsilon(1). CF(0) has three main subunits: a, b and c.

It localises to the cell inner membrane. In terms of biological role, produces ATP from ADP in the presence of a proton gradient across the membrane. This Brucella abortus (strain S19) protein is ATP synthase epsilon chain.